Consider the following 358-residue polypeptide: Glycerol-3-phosphate dehydrogenase [NAD(P)+] (358 aa).

NADPH-binding residues include Ser-33, Phe-34, Arg-54, and Lys-128. Sn-glycerol 3-phosphate is bound by residues Lys-128 and Gly-156. Ala-160 serves as a coordination point for NADPH. Sn-glycerol 3-phosphate is bound by residues Lys-211, Asp-264, Ser-274, Arg-275, and Asn-276. Residue Lys-211 is the Proton acceptor of the active site. Position 275 (Arg-275) interacts with NADPH. NADPH is bound by residues Val-299 and Glu-301.

The protein belongs to the NAD-dependent glycerol-3-phosphate dehydrogenase family.

The protein localises to the cytoplasm. The catalysed reaction is sn-glycerol 3-phosphate + NAD(+) = dihydroxyacetone phosphate + NADH + H(+). It carries out the reaction sn-glycerol 3-phosphate + NADP(+) = dihydroxyacetone phosphate + NADPH + H(+). It functions in the pathway membrane lipid metabolism; glycerophospholipid metabolism. Its function is as follows. Catalyzes the reduction of the glycolytic intermediate dihydroxyacetone phosphate (DHAP) to sn-glycerol 3-phosphate (G3P), the key precursor for phospholipid synthesis. This is Glycerol-3-phosphate dehydrogenase [NAD(P)+] from Saccharophagus degradans (strain 2-40 / ATCC 43961 / DSM 17024).